The sequence spans 608 residues: Glutamine--fructose-6-phosphate aminotransferase [isomerizing] (608 aa).

Catalysis depends on Cys-2, which acts as the Nucleophile; for GATase activity. Residues 2 to 217 (CGIVGYSGKK…DKEFVVLTSE (216 aa)) form the Glutamine amidotransferase type-2 domain. 2 consecutive SIS domains span residues 285–424 (TKEQ…NKNT) and 453–598 (KVQK…VDKP). The active-site For Fru-6P isomerization activity is the Lys-603.

In terms of assembly, homodimer.

Its subcellular location is the cytoplasm. It catalyses the reaction D-fructose 6-phosphate + L-glutamine = D-glucosamine 6-phosphate + L-glutamate. Functionally, catalyzes the first step in hexosamine metabolism, converting fructose-6P into glucosamine-6P using glutamine as a nitrogen source. The chain is Glutamine--fructose-6-phosphate aminotransferase [isomerizing] from Clostridium acetobutylicum (strain ATCC 824 / DSM 792 / JCM 1419 / IAM 19013 / LMG 5710 / NBRC 13948 / NRRL B-527 / VKM B-1787 / 2291 / W).